The chain runs to 121 residues: Large ribosomal subunit protein uL18 (121 aa).

The protein belongs to the universal ribosomal protein uL18 family. Part of the 50S ribosomal subunit; part of the 5S rRNA/L5/L18/L25 subcomplex. Contacts the 5S and 23S rRNAs.

This is one of the proteins that bind and probably mediate the attachment of the 5S RNA into the large ribosomal subunit, where it forms part of the central protuberance. The sequence is that of Large ribosomal subunit protein uL18 from Burkholderia mallei (strain NCTC 10247).